A 300-amino-acid polypeptide reads, in one-letter code: Bidirectional sugar transporter SWEET12 (300 aa).

At 1 to 4 (MVQA) the chain is on the extracellular side. The helical transmembrane segment at 5-25 (LVFAVGIVGNILSFLVILAPV) threads the bilayer. The MtN3/slv 1 domain occupies 8-92 (AVGIVGNILS…TVYLLYAPRQ (85 aa)). At 26–38 (PTFYRVYKKKSTE) the chain is on the cytoplasmic side. Residues 39-61 (SFQSVPYAVALLSAMLWLYYALL) traverse the membrane as a helical segment. The Extracellular segment spans residues 62-67 (TSDLLL). Residues 68–88 (LSINSIGCLVESLYLTVYLLY) form a helical membrane-spanning segment. Residues 89 to 99 (APRQAMAFTLK) are Cytoplasmic-facing. The chain crosses the membrane as a helical span at residues 100–120 (LVCAMNLALFAAVVAALQLLV). Topologically, residues 121-128 (KATDRRVT) are extracellular. A helical membrane pass occupies residues 129–149 (LAGGIGASFALAVFVAPLTII). One can recognise a MtN3/slv 2 domain in the interval 131–213 (GGIGASFALA…VLYVVYKNPK (83 aa)). Residues 150–162 (RQVIRTKSVEFMP) are Cytoplasmic-facing. A helical transmembrane segment spans residues 163 to 183 (FWLSFFLTLSAVVWFFYGLLM). Topologically, residues 184 to 185 (KD) are extracellular. A helical transmembrane segment spans residues 186–206 (FFVATPNVLGLLFGLAQMVLY). The Cytoplasmic portion of the chain corresponds to 207–300 (VVYKNPKKNS…PPALPAVEVA (94 aa)). Residues 256-300 (ADLEAAAPATPQRPADDDAIDHRSVVVDIPPPPQPPPALPAVEVA) form a disordered region. Residues 269 to 280 (PADDDAIDHRSV) show a composition bias toward basic and acidic residues. The span at 284 to 294 (IPPPPQPPPAL) shows a compositional bias: pro residues.

The protein belongs to the SWEET sugar transporter family. As to quaternary structure, forms homooligomers and/or heterooligomers.

The protein localises to the cell membrane. In terms of biological role, mediates both low-affinity uptake and efflux of sugar across the plasma membrane. Confers blight susceptibility. Confers TAL effector-mediated susceptibility to Xanthomonas oryzae pv. oryzae. This Oryza sativa subsp. japonica (Rice) protein is Bidirectional sugar transporter SWEET12 (SWEET12).